Reading from the N-terminus, the 473-residue chain is Beta-secretase 1 (473 aa).

The signal sequence occupies residues Met1–Gly21. The propeptide occupies Thr22–Arg45. Residues Thr22–Thr429 lie on the Extracellular side of the membrane. The Peptidase A1 domain occupies Tyr72 to Ala388. The active site involves Asp90. N6-acetyllysine is present on Lys123. N-linked (GlcNAc...) asparagine glycosylation is found at Asn150, Asn169, and Asn195. 3 disulfide bridges follow: Cys188/Cys392, Cys250/Cys415, and Cys302/Cys352. Residues Lys247, Lys251, and Lys257 each carry the N6-acetyllysine modification. The active site involves Asp261. N6-acetyllysine is present on residues Lys271, Lys272, and Lys279. A glycan (N-linked (GlcNAc...) asparagine) is linked at Asn326. Residues Ile430–Cys450 traverse the membrane as a helical segment. 4 S-palmitoyl cysteine lipidation sites follow: Cys446, Cys450, Cys454, and Cys457. Residues Gln451–Lys473 are Cytoplasmic-facing. The segment at Gln451–Lys473 is interaction with RTN3. Positions Asp468 to Leu472 match the DXXLL motif. Residue Ser470 is modified to Phosphoserine. Lys473 participates in a covalent cross-link: Glycyl lysine isopeptide (Lys-Gly) (interchain with G-Cter in ubiquitin).

The protein belongs to the peptidase A1 family. As to quaternary structure, monomer. Interacts (via DXXLL motif) with GGA1, GGA2 and GGA3 (via their VHS domain); the interaction highly increases when BACE1 is phosphorylated at Ser-470. Interacts with RTN1; RTN2; RTN3 and RTN4; the interaction leads to inhibition of amyloid precursor protein processing. Interacts with SNX6. Interacts with PCSK9. Interacts with NAT8 and NAT8B. Interacts with BIN1. Interacts (via extracellular domain) with ADAM10 (via extracellular domain). Interacts with SORL1; this interaction may affect binding with APP and hence reduce APP cleavage. Interacts with NRDC AND NRG1. Palmitoylation mediates lipid raft localization. In terms of processing, acetylated in the endoplasmic reticulum at Lys-123, Lys-247, Lys-251, Lys-257, Lys-271, Lys-272, and Lys-279. Acetylation by NAT8 and NAT8B is transient and deacetylation probably occurs in the Golgi. Acetylation regulates the maturation, the transport to the plasma membrane, the stability and the expression of the protein. Post-translationally, ubiquitinated at Lys-473, ubiquitination leads to lysosomal degradation. Monoubiquitinated and 'Lys-63'-linked polyubitinated. Deubiquitnated by USP8; inhibits lysosomal degradation. Phosphorylation at Ser-470 is required for interaction with GGA1 and retrograded transport from endosomal compartments to the trans-Golgi network. Non-phosphorylated BACE1 enters a direct recycling route to the cell surface. In terms of processing, N-Glycosylated. Addition of a bisecting N-acetylglucosamine by MGAT3 blocks lysosomal targeting, further degradation and is required for maintaining stability under stress conditions.

It localises to the cell membrane. The protein localises to the golgi apparatus. It is found in the trans-Golgi network. The protein resides in the endoplasmic reticulum. Its subcellular location is the endosome. It localises to the cell surface. The protein localises to the cytoplasmic vesicle membrane. It is found in the membrane raft. The protein resides in the lysosome. Its subcellular location is the late endosome. It localises to the early endosome. The protein localises to the recycling endosome. It is found in the cell projection. The protein resides in the axon. Its subcellular location is the dendrite. It carries out the reaction Broad endopeptidase specificity. Cleaves Glu-Val-Asn-Leu-|-Asp-Ala-Glu-Phe in the Swedish variant of Alzheimer's amyloid precursor protein.. Its activity is regulated as follows. Inhibited by RTN3 and RTN4. Its function is as follows. Responsible for the proteolytic processing of the amyloid precursor protein (APP). Cleaves at the N-terminus of the A-beta peptide sequence, between residues 671 and 672 of APP, leads to the generation and extracellular release of beta-cleaved soluble APP, and a corresponding cell-associated C-terminal fragment which is later released by gamma-secretase. Cleaves CHL1. The sequence is that of Beta-secretase 1 (BACE1) from Cavia porcellus (Guinea pig).